Reading from the N-terminus, the 945-residue chain is Oxysterol-binding protein homolog C23H4.01c (945 aa).

A GOLD domain is found at 1-131 (METVEIRSKS…PKTVTFLLTA (131 aa)). The 95-residue stretch at 149–243 (KQIISGTLLK…WCNALEKAKN (95 aa)) folds into the PH domain. S288, S419, and S421 each carry phosphoserine. 2 disordered regions span residues 396 to 555 (ESGA…LPHS) and 846 to 894 (LEKD…MEEK). Residues 443-454 (TSSISDTSSNSS) show a composition bias toward low complexity. Residues 460–470 (LNATSLASTVD) show a composition bias toward polar residues. The segment covering 482 to 499 (ESNKENDIKRKQPFHDLM) has biased composition (basic and acidic residues). Phosphoserine is present on S503.

Belongs to the OSBP family.

It is found in the cytoplasm. The polypeptide is Oxysterol-binding protein homolog C23H4.01c (Schizosaccharomyces pombe (strain 972 / ATCC 24843) (Fission yeast)).